A 691-amino-acid polypeptide reads, in one-letter code: Elongation factor G (691 aa).

The region spanning Glu8–Val282 is the tr-type G domain. GTP contacts are provided by residues Ala17 to Thr24, Asp81 to His85, and Asn135 to Asp138.

Belongs to the TRAFAC class translation factor GTPase superfamily. Classic translation factor GTPase family. EF-G/EF-2 subfamily.

It is found in the cytoplasm. Its function is as follows. Catalyzes the GTP-dependent ribosomal translocation step during translation elongation. During this step, the ribosome changes from the pre-translocational (PRE) to the post-translocational (POST) state as the newly formed A-site-bound peptidyl-tRNA and P-site-bound deacylated tRNA move to the P and E sites, respectively. Catalyzes the coordinated movement of the two tRNA molecules, the mRNA and conformational changes in the ribosome. This chain is Elongation factor G, found in Prochlorococcus marinus (strain MIT 9515).